Here is a 189-residue protein sequence, read N- to C-terminus: MSIKSDKWIRRMAQESGMIEPFEPGQVRQSADGQKIVSYGTSSYGYDIRCAREFKVFTNIYSTVVDPKNFDEKSFVDIESDVCIIPPNSFALARTMEYFRIPRNVLTICLGKSTYARCGIIVNVTPFEPEWEGYVTLEFSNTTPLPAKIYAGEGCAQVLFFESDEVCETSYRDRGGKYQGQTGVTLPKT.

Residues 112-117 (KSTYAR), 136-138 (TLE), Gln157, Tyr171, and Gln181 contribute to the dCTP site. The Proton donor/acceptor role is filled by Glu138.

The protein belongs to the dCTP deaminase family. As to quaternary structure, homotrimer.

It catalyses the reaction dCTP + H2O + H(+) = dUTP + NH4(+). It participates in pyrimidine metabolism; dUMP biosynthesis; dUMP from dCTP (dUTP route): step 1/2. Its function is as follows. Catalyzes the deamination of dCTP to dUTP. The sequence is that of dCTP deaminase from Leptothrix cholodnii (strain ATCC 51168 / LMG 8142 / SP-6) (Leptothrix discophora (strain SP-6)).